We begin with the raw amino-acid sequence, 370 residues long: Nociceptin receptor (370 aa).

Residues 1 to 48 (MESLFPAPFWEVLYGSPLQGNLSLLSPNHSLLPPHLLLNASHGAFLPL) are Extracellular-facing. N-linked (GlcNAc...) asparagine glycans are attached at residues Asn21, Asn28, and Asn39. The helical transmembrane segment at 49 to 74 (GLKVTIVGLYLAVCVGGLLGNCLVMY) threads the bilayer. Over 75-87 (VILRHTKMKTATN) the chain is Cytoplasmic. The chain crosses the membrane as a helical span at residues 88–109 (IYIFNLALADTAVLLTLPFQGT). The Extracellular portion of the chain corresponds to 110 to 124 (DVLLGFWPFGNALCK). Residues Cys123 and Cys200 are joined by a disulfide bond. Residues 125–146 (AVIAIDYYNMFTSAFTLTAMSV) traverse the membrane as a helical segment. Residues 147–165 (DRYVAICHPIRALDVRTSS) lie on the Cytoplasmic side of the membrane. The helical transmembrane segment at 166–188 (KAQAVNVAIWALASIVGVPVAIM) threads the bilayer. Over 189–211 (GSAQVEDEEIECLVEIPAPQDYW) the chain is Extracellular. The helical transmembrane segment at 212-236 (GPVFAVCIFLFSFVIPVLIISVCYS) threads the bilayer. Residues 237 to 264 (LMVRRLRGVRLLSGSREKDRNLRRITRL) are Cytoplasmic-facing. A helical transmembrane segment spans residues 265 to 285 (VLVVVAVFVGCWTPVQVFVLV). Residues 286-300 (QGLGVQPGSETAVAV) lie on the Extracellular side of the membrane. The chain crosses the membrane as a helical span at residues 301–322 (LRFCTALGYVNSCLNPILYAFL). The Cytoplasmic segment spans residues 323–370 (DENFKACFRKFCCAPTRRREMQVSDRVRSIAKDVALACKTSETVPRPA). A lipid anchor (S-palmitoyl cysteine) is attached at Cys334.

The protein belongs to the G-protein coupled receptor 1 family. Phosphorylation at Ser-363 requires GRK3. Detected in brain cortex, stomach, ileum, jejunum and colon.

The protein resides in the cell membrane. The protein localises to the cytoplasmic vesicle. Its function is as follows. G-protein coupled opioid receptor that functions as a receptor for the endogenous neuropeptide nociceptin. Ligand binding causes a conformation change that triggers signaling via guanine nucleotide-binding proteins (G proteins) and modulates the activity of down-stream effectors. Signaling via G proteins mediates inhibition of adenylate cyclase activity and calcium channel activity. Arrestins modulate signaling via G proteins and mediate the activation of alternative signaling pathways that lead to the activation of MAP kinases. Plays a role in modulating nociception and the perception of pain. Plays a role in the regulation of locomotor activity by the neuropeptide nociceptin. The chain is Nociceptin receptor (OPRL1) from Sus scrofa (Pig).